A 1321-amino-acid chain; its full sequence is C-Jun-amino-terminal kinase-interacting protein 4 (1321 aa).

Residue Met1 is modified to N-acetylmethionine. Residues 7 to 95 enclose the RH1 domain; it reads VVYQEEPGGS…ITQYEREKAL (89 aa). Residues 66 to 166 adopt a coiled-coil conformation; that stretch reads AQDQEHQVEL…NALHQRHTEM (101 aa). Phosphoserine is present on residues Ser109, Ser183, Ser185, Ser194, and Ser203. The interval 203 to 292 is disordered; that stretch reads SLGIFPLPAG…SDVATIPTDT (90 aa). Thr217 is modified (phosphothreonine). Residues 236–253 show a composition bias toward polar residues; sequence ELSQPRSHTSLKVSNSPE. 5 positions are modified to phosphoserine: Ser238, Ser251, Ser265, Ser268, and Ser272. Residues 266–285 show a composition bias toward polar residues; it reads DVSQGGSKATTPASTANSDV. Thr292 carries the post-translational modification Phosphothreonine. Residues Ser311, Ser329, Ser332, and Ser347 each carry the phosphoserine modification. Phosphothreonine occurs at positions 348, 365, and 418. A coiled-coil region spans residues 408–534; the sequence is REVENLILEN…LQEAVRWTEM (127 aa). The segment covering 473 to 489 has biased composition (basic and acidic residues); sequence LRKARAEAEDARQKAKD. 2 disordered regions span residues 473–500 and 563–600; these read LRKARAEAEDARQKAKDDDDSDIPTAQR and SSNTTKKPEPPVNLKYNAPTSHVTPSVKKRSSTLSQLP. Residues 500-571 form the RH2 domain; sequence RKRFTRVEMA…SSSNTTKKPE (72 aa). Residue Thr586 is modified to Phosphothreonine. Ser588 bears the Phosphoserine mark. Thr595 carries the post-translational modification Phosphothreonine. A phosphoserine mark is found at Ser705, Ser728, Ser730, Ser732, and Ser733. A coiled-coil region spans residues 724-758; that stretch reads SKQRSASQSSLDKLDQELKEQQKELKNQEELSSLV. A disordered region spans residues 854-906; the sequence is GAATSPSTNGASPVMDKPPEMEAENSEVDENVPTAEEATEATEGNAGSAEDTV. Residues 855–864 show a composition bias toward polar residues; it reads AATSPSTNGA. Residues 874-883 show a composition bias toward acidic residues; that stretch reads MEAENSEVDE. Positions 894–903 are enriched in low complexity; sequence ATEGNAGSAE. At Ser1188 the chain carries Phosphoserine. Positions 1239 to 1266 are disordered; it reads PQSSSSGTDLTGDKAGPSAQEPGSQTPL. Phosphothreonine is present on Thr1264.

The protein belongs to the JIP scaffold family. As to quaternary structure, homodimer. The homodimer interacts with ARF6, forming a heterotetramer. Homooligomer. Interacts with MAX, MAPK14, MAP3K3, MYC, KNS2 and MAP2K4. Interaction with KNS2 is important in the formation of ternary complex with MAPK8. Interacts with NFKB1. Interacts with PIP4P1. Interacts with PIKFYVE. Interacts with MAPK8, MAPK9, MAPK10. Post-translationally, phosphorylated by MAPK8 and MAPK14. As to expression, expressed only in testis on the round spermatids of stage I, II and II. Absent in spermatogonia and spermatocyte. In terms of tissue distribution, expressed in testis and in acute myeloid leukemia (AML) patients. Expressed in testis.

It is found in the cytoplasm. It localises to the perinuclear region. Its subcellular location is the lysosome membrane. The protein localises to the cytoplasmic vesicle. The protein resides in the secretory vesicle. It is found in the acrosome. With respect to regulation, may play a role in spermatozoa-egg-interaction. The JNK-interacting protein (JIP) group of scaffold proteins selectively mediates JNK signaling by aggregating specific components of the MAPK cascade to form a functional JNK signaling module. Regulates lysosomal positioning by acting as an adapter protein which links PIP4P1-positive lysosomes to the dynein-dynactin complex. Assists PIKFYVE selective functionality in microtubule-based endosome-to-TGN trafficking. The sequence is that of C-Jun-amino-terminal kinase-interacting protein 4 from Homo sapiens (Human).